The following is a 169-amino-acid chain: Peptide methionine sulfoxide reductase MsrA (169 aa).

Cys10 is an active-site residue.

It belongs to the MsrA Met sulfoxide reductase family.

The catalysed reaction is L-methionyl-[protein] + [thioredoxin]-disulfide + H2O = L-methionyl-(S)-S-oxide-[protein] + [thioredoxin]-dithiol. It catalyses the reaction [thioredoxin]-disulfide + L-methionine + H2O = L-methionine (S)-S-oxide + [thioredoxin]-dithiol. Has an important function as a repair enzyme for proteins that have been inactivated by oxidation. Catalyzes the reversible oxidation-reduction of methionine sulfoxide in proteins to methionine. This Streptococcus pyogenes serotype M28 (strain MGAS6180) protein is Peptide methionine sulfoxide reductase MsrA.